The primary structure comprises 299 residues: ATP phosphoribosyltransferase (299 aa).

Belongs to the ATP phosphoribosyltransferase family. Long subfamily. In terms of assembly, equilibrium between an active dimeric form, an inactive hexameric form and higher aggregates. Interconversion between the various forms is largely reversible and is influenced by the natural substrates and inhibitors of the enzyme. It depends on Mg(2+) as a cofactor.

It localises to the cytoplasm. It carries out the reaction 1-(5-phospho-beta-D-ribosyl)-ATP + diphosphate = 5-phospho-alpha-D-ribose 1-diphosphate + ATP. It functions in the pathway amino-acid biosynthesis; L-histidine biosynthesis; L-histidine from 5-phospho-alpha-D-ribose 1-diphosphate: step 1/9. Feedback inhibited by histidine. Functionally, catalyzes the condensation of ATP and 5-phosphoribose 1-diphosphate to form N'-(5'-phosphoribosyl)-ATP (PR-ATP). Has a crucial role in the pathway because the rate of histidine biosynthesis seems to be controlled primarily by regulation of HisG enzymatic activity. The sequence is that of ATP phosphoribosyltransferase from Pectobacterium atrosepticum (strain SCRI 1043 / ATCC BAA-672) (Erwinia carotovora subsp. atroseptica).